A 515-amino-acid chain; its full sequence is MSDQVIIFDTTLRDGEQALSASLTVKEKLQIAYALERLGVDVIEAGFPVSSPGDFESVRTIAQHIKNSRICGLSRAVAKDIDAAAEALKVAEAFRIHTFISTSTVHVQDKLRRSYDDVVEMGVKAVKHARKYTDDVEFSCEDAGRTPIDNLCRMVEAAINAGANTINIPDTVGYTVPGEFGGIVQTLFNRVPNIDKAIISVHCHDDLGMSVANSIAAVQAGARQVEGTINGIGERAGNCSLEEIAMILKTRSEYLGVHTNLKHDEIHRTSKLVSQLCNMPIQSNKAIVGANAFSHSSGIHQDGMLKNKNTYEIMTPESIGLKNQALNLTSRSGRAAVKSHMDEMGYKEDEYNLDTLYADFVKLADRKGQVFDYDLEALMHFANLRDEDDFYKLNYLSVQSGSVMATTSIKLLCGDEEKCEAAVGNGPVDALYQCIYKLTGYDIVLDKFDLTAKGEGEDGLGQADIIANYKGRKYHGTGLATDIIEASGQALLHVINSIHRADQIAEIKQKKVETV.

Residues 5–267 (VIIFDTTLRD…HTNLKHDEIH (263 aa)) enclose the Pyruvate carboxyltransferase domain. Mn(2+) is bound by residues Asp14, His202, His204, and Asn238. Positions 392-515 (KLNYLSVQSG…EIKQKKVETV (124 aa)) are regulatory domain.

It belongs to the alpha-IPM synthase/homocitrate synthase family. LeuA type 1 subfamily. Homodimer. It depends on Mn(2+) as a cofactor.

It localises to the cytoplasm. The catalysed reaction is 3-methyl-2-oxobutanoate + acetyl-CoA + H2O = (2S)-2-isopropylmalate + CoA + H(+). The protein operates within amino-acid biosynthesis; L-leucine biosynthesis; L-leucine from 3-methyl-2-oxobutanoate: step 1/4. In terms of biological role, catalyzes the condensation of the acetyl group of acetyl-CoA with 3-methyl-2-oxobutanoate (2-ketoisovalerate) to form 3-carboxy-3-hydroxy-4-methylpentanoate (2-isopropylmalate). In Aliivibrio fischeri (strain MJ11) (Vibrio fischeri), this protein is 2-isopropylmalate synthase.